The chain runs to 460 residues: tRNA modification GTPase MnmE (460 aa).

Positions 22, 83, and 122 each coordinate (6S)-5-formyl-5,6,7,8-tetrahydrofolate. One can recognise a TrmE-type G domain in the interval glycine 219–glutamine 381. Asparagine 229 contacts K(+). GTP is bound by residues asparagine 229–serine 234, serine 248–threonine 254, and aspartate 273–glycine 276. Serine 233 serves as a coordination point for Mg(2+). 3 residues coordinate K(+): serine 248, isoleucine 250, and threonine 253. Residue threonine 254 participates in Mg(2+) binding. Residue lysine 460 participates in (6S)-5-formyl-5,6,7,8-tetrahydrofolate binding.

The protein belongs to the TRAFAC class TrmE-Era-EngA-EngB-Septin-like GTPase superfamily. TrmE GTPase family. As to quaternary structure, homodimer. Heterotetramer of two MnmE and two MnmG subunits. K(+) serves as cofactor.

It is found in the cytoplasm. In terms of biological role, exhibits a very high intrinsic GTPase hydrolysis rate. Involved in the addition of a carboxymethylaminomethyl (cmnm) group at the wobble position (U34) of certain tRNAs, forming tRNA-cmnm(5)s(2)U34. The protein is tRNA modification GTPase MnmE of Aster yellows witches'-broom phytoplasma (strain AYWB).